The primary structure comprises 477 residues: Aspartyl/glutamyl-tRNA(Asn/Gln) amidotransferase subunit B (477 aa).

This sequence belongs to the GatB/GatE family. GatB subfamily. As to quaternary structure, heterotrimer of A, B and C subunits.

It catalyses the reaction L-glutamyl-tRNA(Gln) + L-glutamine + ATP + H2O = L-glutaminyl-tRNA(Gln) + L-glutamate + ADP + phosphate + H(+). The catalysed reaction is L-aspartyl-tRNA(Asn) + L-glutamine + ATP + H2O = L-asparaginyl-tRNA(Asn) + L-glutamate + ADP + phosphate + 2 H(+). Allows the formation of correctly charged Asn-tRNA(Asn) or Gln-tRNA(Gln) through the transamidation of misacylated Asp-tRNA(Asn) or Glu-tRNA(Gln) in organisms which lack either or both of asparaginyl-tRNA or glutaminyl-tRNA synthetases. The reaction takes place in the presence of glutamine and ATP through an activated phospho-Asp-tRNA(Asn) or phospho-Glu-tRNA(Gln). In Ureaplasma urealyticum serovar 10 (strain ATCC 33699 / Western), this protein is Aspartyl/glutamyl-tRNA(Asn/Gln) amidotransferase subunit B.